A 318-amino-acid chain; its full sequence is UAP56-interacting factor (318 aa).

N-acetylmethionine is present on Met1. The segment at 1 to 25 (MNRFGTRLVGATATSSPPPKARSNE) is disordered. Position 14 is a phosphothreonine (Thr14). Phosphoserine occurs at positions 16 and 23. Residues 26-44 (NLDKIDMSLDDIIKLNRKE) carry the UAP56-binding motif motif. Position 61 is a phosphoserine (Ser61). The interval 79-100 (GFGKTSLNRRGRVMPGKRRPNG) is disordered. The segment covering 85–98 (LNRRGRVMPGKRRP) has biased composition (basic residues). At Ser118 the chain carries Phosphoserine. A Glycyl lysine isopeptide (Lys-Gly) (interchain with G-Cter in SUMO1) cross-link involves residue Lys140. Lys261 participates in a covalent cross-link: Glycyl lysine isopeptide (Lys-Gly) (interchain with G-Cter in SUMO2).

Belongs to the UIF family. As to quaternary structure, interacts with CHTOP. Interacts with DDX39B/UAP56 and NXF1; interaction with DDX39B/UAP56 and NXF1 are mutually exclusive. Interacts with SSRP1; required for its recruitment to mRNAs. Expressed in a wide variety of cancer types.

Its subcellular location is the nucleus. It localises to the nucleoplasm. The protein resides in the nucleus speckle. In terms of biological role, required for mRNA export from the nucleus to the cytoplasm. Acts as an adapter that uses the DDX39B/UAP56-NFX1 pathway to ensure efficient mRNA export and delivering to the nuclear pore. Associates with spliced and unspliced mRNAs simultaneously with ALYREF/THOC4. The sequence is that of UAP56-interacting factor (FYTTD1) from Homo sapiens (Human).